A 63-amino-acid polypeptide reads, in one-letter code: Small ribosomal subunit protein eS27 (63 aa).

The Zn(2+) site is built by C18, C21, C37, and C40. Residues 18-40 (CIDCGNEQIVFSHPATKVRCLIC) form a C4-type zinc finger.

It belongs to the eukaryotic ribosomal protein eS27 family. Part of the 30S ribosomal subunit. Requires Zn(2+) as cofactor.

This Pyrococcus furiosus (strain ATCC 43587 / DSM 3638 / JCM 8422 / Vc1) protein is Small ribosomal subunit protein eS27.